A 158-amino-acid chain; its full sequence is MSKKSKKPENQICANKKARHEYFIEETFEAGLSLQGWEVKAIRAGKMTITEAYIIFRNNEAFLFGAHIQPLLSSSTHVSPDSIRTRKLLLNRREIEKLMGAVNQKGYACVPLSCYWKNSLVKCQIGLALGKKQHDKRKTLKDRDWERDKQRGFKKDLD.

Residues 135–158 (DKRKTLKDRDWERDKQRGFKKDLD) are disordered. The segment covering 141–158 (KDRDWERDKQRGFKKDLD) has biased composition (basic and acidic residues).

Belongs to the SmpB family.

The protein localises to the cytoplasm. Its function is as follows. Required for rescue of stalled ribosomes mediated by trans-translation. Binds to transfer-messenger RNA (tmRNA), required for stable association of tmRNA with ribosomes. tmRNA and SmpB together mimic tRNA shape, replacing the anticodon stem-loop with SmpB. tmRNA is encoded by the ssrA gene; the 2 termini fold to resemble tRNA(Ala) and it encodes a 'tag peptide', a short internal open reading frame. During trans-translation Ala-aminoacylated tmRNA acts like a tRNA, entering the A-site of stalled ribosomes, displacing the stalled mRNA. The ribosome then switches to translate the ORF on the tmRNA; the nascent peptide is terminated with the 'tag peptide' encoded by the tmRNA and targeted for degradation. The ribosome is freed to recommence translation, which seems to be the essential function of trans-translation. In Psychrobacter cryohalolentis (strain ATCC BAA-1226 / DSM 17306 / VKM B-2378 / K5), this protein is SsrA-binding protein.